A 145-amino-acid chain; its full sequence is MRHRVSGRKLNRTTSHLLAMLANMSVSLIQHEQINTTLPKAKELRPFVEKLITVAKKGNLNARRYLISKIKNEIAVEKLMTTLAPRYAERHGGYIRILKAGFRYGDMAPMAYIEFVDRNIESKGKEFKALKNDARNAKLIAEQSN.

It belongs to the bacterial ribosomal protein bL17 family. Part of the 50S ribosomal subunit. Contacts protein L32.

In Orientia tsutsugamushi (strain Boryong) (Rickettsia tsutsugamushi), this protein is Large ribosomal subunit protein bL17.